The sequence spans 1488 residues: MIERGKFRSLTLINWNGFFARTFDLDELVTTLSGGNGAGKSTTMAAFVTALIPDLTLLHFRNTTEAGATSGSRDKGLHGKLKAGVCYSMLDTINSRHQRVVVGVRLQQVAGRDRKVDIKPFAIQGLPMSVQPTQLVTETLNERQARVLSLAELKDKLDEMEGVQFKQFNSITDYHSLMFDLGIIARRLRSASDRSKFYRLIEASLYGGISSAITRSLRDYLLPENSGVRKAFQDMEAALRENRLTLEAIRVTQSDRDLFKHLISEATDYVAADYMRHANERRVHLDQALAFRRELYTSRKQLAAEQYKHVDMARELGEHNGAEGSLEADYQAASDHLNLVQTALRQQEKIERYEADLEELQIRLEEQNEVVAEAAEMQDENEARAEAAELEVDELKSQLADYQQALDVQQTRAIQYNQAISALARAKELCHLPDLTPESAAEWLDTFQAKEQEATEKLLSLEQKMSVAQTAHSQFEQAYQLVAAINGPLARSEAWDVARELLRDGVNQRHLAEQVQPLRMRLSELEQRLREQQEAERLLAEFCKRQGKNFDIDELEALHQELEARIASLSDSVSSASEQRMALRQEQEQLQSRIQHLMQRAPVWLAAQNSLNQLSEQCGEEFTSSQEVTEYLQQLLEREREAIVERDEVGARKNAVDEEIERLSQPGGAEDQRLNALAERFGGVLLSEIYDDVSLEDAPYFSALYGPSRHAIVVPDLSQIAEQLEGLTDCPEDLYLIEGDPQSFDDSVFSVDELEKAVVVKIADRQWRYSRFPSLPIFGRAARENRIESLHAEREVLSERFATLSFDVQKTQRLHQAFSRFIGSHLSVAFEDDPEAEIRRLNGRRVELERALATHESDNQQQRLQFEQAKEGVSALNRLLPRLNLLADETLADRGDEIQERLDEAQEAARFVQQYGNQLAKLEPVVSVLQSDPEQFEQLKEDYAWSQQMQRDARQQAFALAEVVERRAHFSYSDSAEMLSGNSDLNEKLRQRLEQAEAERTRAREALRSHAAQLSQYSQVLVSLKSSYDTKKELLNDLQRELQDIGVRADSGAEERARQRRDELHAQLSNNRSRRNQLEKALTFCEAEMENLTRKLRKLERDYHEMREQVVTAKAGWCAVMRMVKDNGVERRLHRRELAYLSADELRSMSDKALGALRLAVADNEHLRDVLRLSEDPKRPERKIQFFVAVYQHLRERIRQDIIRTDDPVEAIEQMEIELSRLTEELTSREQKLAISSRSVANIIRKTIQREQNRIRMLNQGLQSVSFGQVNSVRLNVNVRETHATLLDVLSEQQEQHQDLFNSNRLTFSEALAKLYQRLNPQIDMGQRTPQTIGEELLDYRNYLEMEVEVNRGSDGWLRAESGALSTGEAIGTGMSILVMVVQSWEDEARRLRGKDISPCRLLFLDEAARLDARSIATLFELCERLQMQLIIAAPENISPEKGTTYKLVRKVFQNTEHVHVVGLRGFAPQLPETLPGTQTEDTPSEAS.

Residue 34–41 coordinates ATP; it reads GGNGAGKS. Coiled-coil stretches lie at residues 326–418, 444–472, and 509–602; these read LEAD…QYNQ, LDTF…QTAH, and RHLA…QRAP. Residues 666–783 are flexible hinge; that stretch reads PGGAEDQRLN…SLPIFGRAAR (118 aa). Coiled-coil stretches lie at residues 835–923, 977–1116, and 1209–1265; these read EAEI…AKLE, EMLS…AKAG, and VEAI…LQSV. Residues 1049 to 1074 form a disordered region; the sequence is ADSGAEERARQRRDELHAQLSNNRSR. Residues 1051-1065 show a composition bias toward basic and acidic residues; it reads SGAEERARQRRDELH.

It belongs to the SMC family. MukB subfamily. As to quaternary structure, homodimerization via its hinge domain. Binds to DNA via its C-terminal region. Interacts, and probably forms a ternary complex, with MukE and MukF via its C-terminal region. The complex formation is stimulated by calcium or magnesium. Interacts with tubulin-related protein FtsZ.

Its subcellular location is the cytoplasm. The protein localises to the nucleoid. In terms of biological role, plays a central role in chromosome condensation, segregation and cell cycle progression. Functions as a homodimer, which is essential for chromosome partition. Involved in negative DNA supercoiling in vivo, and by this means organize and compact chromosomes. May achieve or facilitate chromosome segregation by condensation DNA from both sides of a centrally located replisome during cell division. This is Chromosome partition protein MukB from Salmonella paratyphi A (strain ATCC 9150 / SARB42).